The following is a 734-amino-acid chain: E3 ubiquitin-protein ligase TRIM56 (734 aa).

Residues 21–60 (CKICLEQLHTPKTLPCLHTYCQDCLAQLDIGGQVRCPECR) form an RING-type zinc finger. B box-type zinc fingers lie at residues 98–149 (KPTC…VVDL) and 164–205 (RQAS…CLPL). Zn(2+) contacts are provided by cysteine 169, histidine 172, cysteine 192, and histidine 197. A coiled-coil region spans residues 215 to 303 (GLEELLAGVD…KIERQEQVAK (89 aa)). A compositionally biased stretch (basic and acidic residues) spans 372 to 381 (EPKQSPKDSG). Positions 372-463 (EPKQSPKDSG…SPILRPNLEG (92 aa)) are disordered. A compositionally biased stretch (basic residues) spans 435 to 448 (RPNKKKKCKGRGKS). The residue at position 454 (serine 454) is a Phosphoserine.

It belongs to the TRIM/RBCC family. Interacts with STING1. Interacts with TICAM1.

It localises to the cytoplasm. The catalysed reaction is S-ubiquitinyl-[E2 ubiquitin-conjugating enzyme]-L-cysteine + [acceptor protein]-L-lysine = [E2 ubiquitin-conjugating enzyme]-L-cysteine + N(6)-ubiquitinyl-[acceptor protein]-L-lysine.. Its pathway is protein modification; protein ubiquitination. Functionally, E3 ubiquitin-protein ligase that plays a key role in innate antiviral immunity by mediating ubiquitination of CGAS and STING1. In response to pathogen- and host-derived double-stranded DNA (dsDNA), targets STING1 to 'Lys-63'-linked ubiquitination, thereby promoting its homodimerization, a step required for the production of type I interferon IFN-beta. Also mediates monoubiquitination of CGAS, thereby promoting CGAS oligomerization and subsequent activation. Independently of its E3 ubiquitin ligase activity, positive regulator of TLR3 signaling. Potentiates extracellular double stranded RNA (dsRNA)-induced expression of IFNB1 and interferon-stimulated genes ISG15, IFIT1/ISG56, CXCL10, OASL and CCL5/RANTES. The sequence is that of E3 ubiquitin-protein ligase TRIM56 from Mus musculus (Mouse).